A 23-amino-acid polypeptide reads, in one-letter code: SV40 early leader protein (23 aa).

Residues 1–23 (MQRPRPPRPLSYSRSSEEAFLEA) are disordered.

The protein belongs to the polyomavirus early leader protein family.

In terms of biological role, may play a role in the lytic cycle. The sequence is that of SV40 early leader protein from Macaca (macaques).